Consider the following 416-residue polypeptide: Lipase (416 aa).

Positions 1-28 (MKCCRIMFVLLGLWFVFGLSVPGGRTEA) are cleaved as a signal peptide. The active-site Nucleophile is the Ser-141. Gly-314 provides a ligand contact to Ca(2+). Asp-345 (charge relay system) is an active-site residue. Asp-385 is a Ca(2+) binding site. The active-site Charge relay system is the His-386. Ca(2+)-binding residues include Glu-388, Asp-393, and Pro-394.

Belongs to the AB hydrolase superfamily. As to quaternary structure, homodimer.

Its subcellular location is the secreted. It catalyses the reaction a triacylglycerol + H2O = a diacylglycerol + a fatty acid + H(+). Activity is inhibited by zinc and iron ions, and activated in vitro in 25% v/v DMSO and acetone. Its function is as follows. Triacylglycerol hydrolase that shows hydrolysis preference towards some of the natural oils such as olive, sunflower and corn oils. In Bacillus sp, this protein is Lipase.